A 301-amino-acid chain; its full sequence is Porin (301 aa).

In terms of assembly, homotrimer.

Its subcellular location is the cell outer membrane. Forms channels that allow the passive diffusion of small hydrophilic solutes up to an exclusion limit of about 0.6 kDa. In Rhodobacter capsulatus (Rhodopseudomonas capsulata), this protein is Porin.